The following is a 126-amino-acid chain: Aspartate 1-decarboxylase (126 aa).

S25 functions as the Schiff-base intermediate with substrate; via pyruvic acid in the catalytic mechanism. At S25 the chain carries Pyruvic acid (Ser). A substrate-binding site is contributed by T57. The active-site Proton donor is Y58. Substrate is bound at residue 73–75; the sequence is GGA.

The protein belongs to the PanD family. As to quaternary structure, heterooctamer of four alpha and four beta subunits. Pyruvate serves as cofactor. In terms of processing, is synthesized initially as an inactive proenzyme, which is activated by self-cleavage at a specific serine bond to produce a beta-subunit with a hydroxyl group at its C-terminus and an alpha-subunit with a pyruvoyl group at its N-terminus.

It is found in the cytoplasm. It catalyses the reaction L-aspartate + H(+) = beta-alanine + CO2. It functions in the pathway cofactor biosynthesis; (R)-pantothenate biosynthesis; beta-alanine from L-aspartate: step 1/1. Catalyzes the pyruvoyl-dependent decarboxylation of aspartate to produce beta-alanine. The protein is Aspartate 1-decarboxylase of Acinetobacter baumannii (strain AB307-0294).